Here is a 398-residue protein sequence, read N- to C-terminus: Cytohesin-1 (398 aa).

Met1 carries the post-translational modification N-acetylmethionine. Residues 1-60 (MEDDDSYVPSDLTAEERQELENIRRRKQELLADIQRLKEEIAEVANEIESLGSTEERKNM) are necessary for localization at adherens junction. Residues 10–67 (SDLTAEERQELENIRRRKQELLADIQRLKEEIAEVANEIESLGSTEERKNMQRNKQVA) are a coiled coil. The SEC7 domain occupies 73–202 (FNMDPKKGIQ…IIMLNTSLHN (130 aa)). Positions 260-377 (NPDREGWLLK…WIKCIKAAIS (118 aa)) constitute a PH domain. A 1,2-diacyl-sn-glycero-3-phospho-(1D-myo-inositol-3,4,5-trisphosphate)-binding positions include 269 to 277 (KLGGGRVKT), Arg281, Tyr292, Arg302, and Asn351. The tract at residues 388 to 396 (RKKKVSSTK) is C-terminal autoinhibitory region.

As to quaternary structure, interacts with TRIM23 and CYTIP. Interacts (via coiled-coil domain) with FRMD4A (via coiled-coil domain). Interacts with FRMD4B. Found in a complex with PARD3, CYTH1 and FRMD4A. Interacts (via N-terminal domain) with INAVA (via N-terminal domain). Ubiquitinated by SCF(FBXW11) E3 ubiquitin-protein ligase complex. Ubiquitination induces proteasomal degradation. In terms of tissue distribution, expressed in colon and small intestine (at protein level).

It is found in the cell membrane. The protein localises to the cytoplasm. The protein resides in the cytosol. It localises to the cell junction. Its subcellular location is the tight junction. It is found in the adherens junction. Functionally, promotes guanine-nucleotide exchange on ARF1, ARF5 and ARF6. Promotes the activation of ARF factors through replacement of GDP with GTP. Plays an important role in membrane trafficking, during junctional remodeling and epithelial polarization, through regulation of ARF6 activity. The chain is Cytohesin-1 (Cyth1) from Mus musculus (Mouse).